Consider the following 178-residue polypeptide: uncharacterized protein (178 aa).

To E.coli YrdD.

This is an uncharacterized protein from Haemophilus influenzae (strain ATCC 51907 / DSM 11121 / KW20 / Rd).